We begin with the raw amino-acid sequence, 408 residues long: Acetate kinase (408 aa).

Asparagine 7 lines the Mg(2+) pocket. Lysine 14 provides a ligand contact to ATP. Arginine 91 is a binding site for substrate. Residue aspartate 148 is the Proton donor/acceptor of the active site. ATP contacts are provided by residues 208 to 212 (HLGNG), 283 to 285 (DFR), and 331 to 335 (GIGEN). Residue glutamate 384 coordinates Mg(2+).

It belongs to the acetokinase family. As to quaternary structure, homodimer. Mg(2+) is required as a cofactor. The cofactor is Mn(2+).

It is found in the cytoplasm. The catalysed reaction is acetate + ATP = acetyl phosphate + ADP. Its pathway is metabolic intermediate biosynthesis; acetyl-CoA biosynthesis; acetyl-CoA from acetate: step 1/2. Its function is as follows. Catalyzes the formation of acetyl phosphate from acetate and ATP. Can also catalyze the reverse reaction. In Methanosarcina barkeri (strain Fusaro / DSM 804), this protein is Acetate kinase.